The following is a 366-amino-acid chain: Histidinol-phosphate aminotransferase 2 (366 aa).

The span at 1–11 shows a compositional bias: polar residues; that stretch reads MQVKDQLSSLQ. Residues 1–21 form a disordered region; the sequence is MQVKDQLSSLQPYKPGKSPEQ. At Lys-222 the chain carries N6-(pyridoxal phosphate)lysine.

Belongs to the class-II pyridoxal-phosphate-dependent aminotransferase family. Histidinol-phosphate aminotransferase subfamily. Homodimer. It depends on pyridoxal 5'-phosphate as a cofactor.

The catalysed reaction is L-histidinol phosphate + 2-oxoglutarate = 3-(imidazol-4-yl)-2-oxopropyl phosphate + L-glutamate. It functions in the pathway amino-acid biosynthesis; L-histidine biosynthesis; L-histidine from 5-phospho-alpha-D-ribose 1-diphosphate: step 7/9. The sequence is that of Histidinol-phosphate aminotransferase 2 from Bacillus cereus (strain ATCC 10987 / NRS 248).